A 341-amino-acid chain; its full sequence is Glycerol-3-phosphate dehydrogenase [NAD(P)+] (341 aa).

NADPH is bound by residues Ser-14, Phe-15, Arg-35, and Lys-108. 2 residues coordinate sn-glycerol 3-phosphate: Lys-108 and Gly-136. NADPH is bound at residue Ser-140. The sn-glycerol 3-phosphate site is built by Lys-191, Asp-244, Ser-254, Arg-255, and Asn-256. Lys-191 functions as the Proton acceptor in the catalytic mechanism. An NADPH-binding site is contributed by Arg-255. NADPH is bound by residues Val-279 and Glu-281.

The protein belongs to the NAD-dependent glycerol-3-phosphate dehydrogenase family.

The protein localises to the cytoplasm. The catalysed reaction is sn-glycerol 3-phosphate + NAD(+) = dihydroxyacetone phosphate + NADH + H(+). The enzyme catalyses sn-glycerol 3-phosphate + NADP(+) = dihydroxyacetone phosphate + NADPH + H(+). Its pathway is membrane lipid metabolism; glycerophospholipid metabolism. Catalyzes the reduction of the glycolytic intermediate dihydroxyacetone phosphate (DHAP) to sn-glycerol 3-phosphate (G3P), the key precursor for phospholipid synthesis. This is Glycerol-3-phosphate dehydrogenase [NAD(P)+] from Pseudomonas putida (strain GB-1).